The chain runs to 964 residues: Vitamin B12-dependent ribonucleotide reductase (964 aa).

The interval 1–21 (MTETASGPARGSRAKGTKAKG) is disordered. Over residues 12–21 (SRAKGTKAKG) the composition is skewed to basic residues. Residues Ser142, 158–159 (AC), Gly187, 363–367 (NPCSE), and 553–557 (PTGTI) contribute to the substrate site. The cysteines at positions 159 and 376 are disulfide-linked. Asn363 (proton acceptor) is an active-site residue. Catalysis depends on Cys365, which acts as the Cysteine radical intermediate. The active-site Proton acceptor is the Glu367.

Belongs to the ribonucleoside diphosphate reductase class-2 family. The cofactor is adenosylcob(III)alamin.

The catalysed reaction is a 2'-deoxyribonucleoside 5'-diphosphate + [thioredoxin]-disulfide + H2O = a ribonucleoside 5'-diphosphate + [thioredoxin]-dithiol. Functionally, catalyzes the reduction of ribonucleotides to deoxyribonucleotides. May function to provide a pool of deoxyribonucleotide precursors for DNA repair during oxygen limitation and/or for immediate growth after restoration of oxygen. The chain is Vitamin B12-dependent ribonucleotide reductase (nrdJ) from Streptomyces avermitilis (strain ATCC 31267 / DSM 46492 / JCM 5070 / NBRC 14893 / NCIMB 12804 / NRRL 8165 / MA-4680).